Here is a 171-residue protein sequence, read N- to C-terminus: uncharacterized protein (171 aa).

2 disordered regions span residues 68–124 (NKNN…ASQQ) and 140–171 (GDED…SIKN). Over residues 141–160 (DEDKGMDSTLKLPERTKRDS) the composition is skewed to basic and acidic residues.

Belongs to the asfivirus H171R family.

Its subcellular location is the virion. This is an uncharacterized protein from Ornithodoros (relapsing fever ticks).